A 478-amino-acid chain; its full sequence is tRNA-2-methylthio-N(6)-dimethylallyladenosine synthase (478 aa).

The MTTase N-terminal domain occupies 39 to 157; it reads KLVFTQTFGC…FPQLLTESIN (119 aa). Cys48, Cys84, Cys118, Cys194, Cys198, and Cys201 together coordinate [4Fe-4S] cluster. In terms of domain architecture, Radical SAM core spans 180–410; sequence RKFELKAFVN…LEAVNRISAE (231 aa). In terms of domain architecture, TRAM spans 410 to 477; it reads EINDGYKDRI…TFSLNGILVN (68 aa).

Belongs to the methylthiotransferase family. MiaB subfamily. In terms of assembly, monomer. [4Fe-4S] cluster is required as a cofactor.

It localises to the cytoplasm. It catalyses the reaction N(6)-dimethylallyladenosine(37) in tRNA + (sulfur carrier)-SH + AH2 + 2 S-adenosyl-L-methionine = 2-methylsulfanyl-N(6)-dimethylallyladenosine(37) in tRNA + (sulfur carrier)-H + 5'-deoxyadenosine + L-methionine + A + S-adenosyl-L-homocysteine + 2 H(+). Catalyzes the methylthiolation of N6-(dimethylallyl)adenosine (i(6)A), leading to the formation of 2-methylthio-N6-(dimethylallyl)adenosine (ms(2)i(6)A) at position 37 in tRNAs that read codons beginning with uridine. The sequence is that of tRNA-2-methylthio-N(6)-dimethylallyladenosine synthase from Clostridioides difficile (strain 630) (Peptoclostridium difficile).